The sequence spans 510 residues: Histidine ammonia-lyase (510 aa).

The 5-imidazolinone (Ala-Gly) cross-link spans Ala-143–Gly-145. Ser-144 carries the 2,3-didehydroalanine (Ser) modification.

The protein belongs to the PAL/histidase family. In terms of processing, contains an active site 4-methylidene-imidazol-5-one (MIO), which is formed autocatalytically by cyclization and dehydration of residues Ala-Ser-Gly.

It is found in the cytoplasm. The catalysed reaction is L-histidine = trans-urocanate + NH4(+). It participates in amino-acid degradation; L-histidine degradation into L-glutamate; N-formimidoyl-L-glutamate from L-histidine: step 1/3. The polypeptide is Histidine ammonia-lyase (Aliivibrio fischeri (strain MJ11) (Vibrio fischeri)).